The chain runs to 615 residues: DNA mismatch repair protein MutL (615 aa).

Residues 369 to 397 form a disordered region; that stretch reads REPVAPRYTPAPASGSRPAAPWPNAQPGY. Residues 378–391 show a composition bias toward low complexity; sequence PAPASGSRPAAPWP.

This sequence belongs to the DNA mismatch repair MutL/HexB family.

Its function is as follows. This protein is involved in the repair of mismatches in DNA. It is required for dam-dependent methyl-directed DNA mismatch repair. May act as a 'molecular matchmaker', a protein that promotes the formation of a stable complex between two or more DNA-binding proteins in an ATP-dependent manner without itself being part of a final effector complex. The sequence is that of DNA mismatch repair protein MutL from Escherichia coli (strain SMS-3-5 / SECEC).